Reading from the N-terminus, the 949-residue chain is AP-1 complex subunit beta-1 (949 aa).

Lys318 bears the N6-acetyllysine mark. Tyr574 is modified (3'-nitrotyrosine). The interval 584 to 625 (GGRGVVHKSLPPRTASSESAESPETAPTGAPPGEQPDVIPAQ) is disordered. Residues 594–611 (PPRTASSESAESPETAPT) show a composition bias toward low complexity.

This sequence belongs to the adaptor complexes large subunit family. In terms of assembly, adaptor protein complex 1 (AP-1) is a heterotetramer composed of two large adaptins (gamma-type subunit AP1G1 and beta-type subunit AP1B1), a medium adaptin (mu-type subunit AP1M1 or AP1M2) and a small adaptin (sigma-type subunit AP1S1 or AP1S2 or AP1S3). In terms of tissue distribution, widely expressed.

It is found in the golgi apparatus. Its subcellular location is the cytoplasmic vesicle. It localises to the clathrin-coated vesicle membrane. In terms of biological role, subunit of clathrin-associated adaptor protein complex 1 that plays a role in protein sorting in the late-Golgi/trans-Golgi network (TGN) and/or endosomes. The AP complexes mediate both the recruitment of clathrin to membranes and the recognition of sorting signals within the cytosolic tails of transmembrane cargo molecules. The polypeptide is AP-1 complex subunit beta-1 (AP1B1) (Homo sapiens (Human)).